Reading from the N-terminus, the 247-residue chain is uncharacterized protein (247 aa).

To M.pneumoniae MPN_635 N-terminal region.

This is an uncharacterized protein from Mycoplasma pneumoniae (strain ATCC 29342 / M129 / Subtype 1) (Mycoplasmoides pneumoniae).